The sequence spans 761 residues: Probable ATP-dependent RNA helicase DDX20 (761 aa).

The Q motif signature appears at 26–54 (VEFSSLLLSKPVLEGLSASGFQRPSPIQL). ATP contacts are provided by residues R48, Q53, 70–77 (AKSGTGKT), and 73–78 (GTGKTC). The 175-residue stretch at 57 to 231 (IPLGRCGLDL…SRYMREPTFV (175 aa)) folds into the Helicase ATP-binding domain. Positions 175 to 178 (DEAD) match the DEAD box motif. One can recognise a Helicase C-terminal domain in the interval 266-415 (SLLELFSKIP…PIPPGIMEEA (150 aa)). Disordered stretches follow at residues 428–525 (PKIP…KSHT) and 570–720 (HDAH…EAGQ). Positions 443–456 (KSEQMKSKPSRESH) are enriched in basic and acidic residues. Residues 498 to 512 (QHDSTITQKQQNNTL) are compositionally biased toward polar residues. Composition is skewed to low complexity over residues 600–613 (SELSSEQKTSSESS) and 623–635 (ESSSSVPSKSTLE). The segment covering 655–679 (TLPSTRVPQQATRSKQKPCQPQSQD) has biased composition (polar residues). Residues 683 to 707 (HHNLPHKHRTASKSSRRPTGPKRRT) show a composition bias toward basic residues.

This sequence belongs to the DEAD box helicase family. DDX20 subfamily. As to quaternary structure, part of the core SMN complex.

It is found in the cytoplasm. It localises to the nucleus. The catalysed reaction is ATP + H2O = ADP + phosphate + H(+). It catalyses the reaction a ribonucleoside 5'-triphosphate + H2O = a ribonucleoside 5'-diphosphate + phosphate + H(+). In terms of biological role, the SMN complex catalyzes the assembly of small nuclear ribonucleoproteins (snRNPs), the building blocks of the spliceosome, and thereby plays an important role in the splicing of cellular pre-mRNAs. Most spliceosomal snRNPs contain a common set of Sm proteins SNRPB, SNRPD1, SNRPD2, SNRPD3, SNRPE, SNRPF and SNRPG that assemble in a heptameric protein ring on the Sm site of the small nuclear RNA to form the core snRNP (Sm core). In the cytosol, the Sm proteins SNRPD1, SNRPD2, SNRPE, SNRPF and SNRPG are trapped in an inactive 6S pICln-Sm complex by the chaperone CLNS1A that controls the assembly of the core snRNP. To assemble core snRNPs, the SMN complex accepts the trapped 5Sm proteins from CLNS1A forming an intermediate. Binding of snRNA inside 5Sm triggers eviction of the SMN complex, thereby allowing binding of SNRPD3 and SNRPB to complete assembly of the core snRNP. May also play a role in the metabolism of small nucleolar ribonucleoprotein (snoRNPs). This Danio rerio (Zebrafish) protein is Probable ATP-dependent RNA helicase DDX20 (ddx20).